The following is a 467-amino-acid chain: Protein indeterminate-domain 6, chloroplastic (467 aa).

Residues 1-20 constitute a chloroplast transit peptide; sequence MSSSYNTIALSSTPTFLLSS. Residues 38-65 are disordered; sequence TMVQQQPTSSVAPPPKKRRNQPGNPNPD. The segment covering 39 to 48 has biased composition (polar residues); sequence MVQQQPTSSV. Position 72 is a phosphoserine (Ser72). 2 C2H2-type zinc fingers span residues 82–104 and 123–153; these read FLCEVCNKGFQREQNLQLHRRGH and YLCPEPSCVHHDPARALGDLTGIKKHYYRKH. The C2H2-type 2; degenerate zinc-finger motif lies at 158–181; that stretch reads WKCDKCSKRYAVQSDWKAHSKTCG. Zn(2+) contacts are provided by Cys160, Cys163, His176, Cys180, Cys187, Cys189, His202, and Cys206. A CCHC-type 2; atypical zinc finger spans residues 185-208; sequence YRCDCGTIFSRRDSYITHRAFCDA. The segment at 195–207 is SHR-binding; that stretch reads RRDSYITHRAFCD. The segment at 440–467 is disordered; the sequence is NGRGGRSGGPPLDAEMKFSHPNHPYGKA.

The protein localises to the plastid. The protein resides in the chloroplast. Probable transcription factor. In Arabidopsis thaliana (Mouse-ear cress), this protein is Protein indeterminate-domain 6, chloroplastic.